The sequence spans 212 residues: ATP-dependent dethiobiotin synthetase BioD (212 aa).

13–18 (GIGKTV) provides a ligand contact to ATP. Residue T17 coordinates Mg(2+). K33 is a catalytic residue. S37 contributes to the substrate binding site. Residue E100 participates in Mg(2+) binding. ATP is bound by residues 100–103 (EGAG) and 184–186 (PRL).

The protein belongs to the dethiobiotin synthetase family. Homodimer. It depends on Mg(2+) as a cofactor.

The protein resides in the cytoplasm. The catalysed reaction is (7R,8S)-7,8-diammoniononanoate + CO2 + ATP = (4R,5S)-dethiobiotin + ADP + phosphate + 3 H(+). It participates in cofactor biosynthesis; biotin biosynthesis; biotin from 7,8-diaminononanoate: step 1/2. Functionally, catalyzes a mechanistically unusual reaction, the ATP-dependent insertion of CO2 between the N7 and N8 nitrogen atoms of 7,8-diaminopelargonic acid (DAPA, also called 7,8-diammoniononanoate) to form a ureido ring. In Brucella anthropi (strain ATCC 49188 / DSM 6882 / CCUG 24695 / JCM 21032 / LMG 3331 / NBRC 15819 / NCTC 12168 / Alc 37) (Ochrobactrum anthropi), this protein is ATP-dependent dethiobiotin synthetase BioD.